Consider the following 134-residue polypeptide: TSC22 domain family protein 3 (134 aa).

The residue at position 1 (M1) is an N-acetylmethionine. The tract at residues M1–L60 is AP1-binding. A42 and V73 each carry phosphoserine. A leucine-zipper region spans residues L76–L97. Phosphoserine is present on S102. The segment at K108–V134 is disordered.

It belongs to the TSC-22/Dip/Bun family. In terms of assembly, can form homodimers, however it is likely to function as a monomer. Interacts with NFKB1. Interacts (via N-terminus) with JUN and FOS; these interactions inhibit the binding of active AP1 to its target DNA. As to quaternary structure, interacts with MYOD1. Interacts with HDAC1; this interaction affects HDAC1 activity on MYOG promoter and thus inhibits MYOD1 transcriptional activity. In terms of tissue distribution, ubiquitously expressed, including in the fetal brain and liver. Expressed in brain, lung, spleen and skeletal muscle. Lower levels detected in heart and kidney. Not detected in the pancreas. In non-lymphoid tissues, in the absence of inflammation, the major source of constitutive expression is the macrophage lineage. Also expressed in cells from different hemopoietic cell lineages, including bone marrow cells, CD34+ stem cells, mature B- and T-cells, monocytes and granulocytes. Down-regulated in activated macrophages from inflammatory lesions of delayed-type hypersensitivity (DTH) reactions, such as in tuberculosis and in Crohn disease, whereas in Burkitt lymphoma, persists in macrophages involved in the phagocytosis of apoptotic malignant cells.

The protein localises to the cytoplasm. The protein resides in the nucleus. Protects T-cells from IL2 deprivation-induced apoptosis through the inhibition of FOXO3A transcriptional activity that leads to the down-regulation of the pro-apoptotic factor BCL2L11. In macrophages, plays a role in the anti-inflammatory and immunosuppressive effects of glucocorticoids and IL10. In T-cells, inhibits anti-CD3-induced NFKB1 nuclear translocation and thereby NFKB1 DNA-binding activities. In vitro, suppresses AP-1 transcription factor complex DNA-binding activities. In terms of biological role, inhibits myogenic differentiation and mediates anti-myogenic effects of glucocorticoids by binding and regulating MYOD1 and HDAC1 transcriptional activity resulting in reduced expression of MYOG. In Homo sapiens (Human), this protein is TSC22 domain family protein 3.